An 84-amino-acid chain; its full sequence is MERSNRKTRIGRVVSNKMDKTIVVAVETKVRHPLYGKIMNRTTKFKAHDENNAANINDKVSIMETRPLSKQKRWRLVEVVEKAK.

It belongs to the universal ribosomal protein uS17 family. In terms of assembly, part of the 30S ribosomal subunit.

Its function is as follows. One of the primary rRNA binding proteins, it binds specifically to the 5'-end of 16S ribosomal RNA. The chain is Small ribosomal subunit protein uS17 from Clostridium botulinum (strain Okra / Type B1).